A 349-amino-acid chain; its full sequence is UDP-galactose/UDP-glucose transporter 4 (349 aa).

8 helical membrane-spanning segments follow: residues 23 to 43 (WQQFLICSSGFFFGYLVNGIC), 56 to 76 (GWYFTFAQGLVYIALIYMYGF), 115 to 135 (IMFKSTKVLPVMVMGAFIPGL), 140 to 160 (PVHEYISAMLLVIGLILFTLA), 167 to 187 (NFSIIGVMMISGALIMDAFLG), 205 to 225 (MLFCSTVVGLPFLLAPMILTG), 248 to 268 (AMATFIGQVSVLSLIALFGAA), and 293 to 313 (LTEQHGTGLLLIFMGIILKMV). Residues 316–349 (PNPNPKSSGSGQTPGKLERVKFEKEDDEESRPLV) are disordered. Positions 340–349 (EDDEESRPLV) are enriched in acidic residues.

Belongs to the nucleotide-sugar transporter family. UDP-galactose:UMP antiporter (TC 2.A.7.11) subfamily.

It localises to the membrane. In terms of biological role, sugar transporter involved in the transport of nucleotide-sugars from cytoplasm into the Golgi and/or the endoplasmic reticulum. The chain is UDP-galactose/UDP-glucose transporter 4 from Arabidopsis thaliana (Mouse-ear cress).